The following is a 92-amino-acid chain: MPANAKVTIRYGKYEACGTVEYREDRLDGLQAVLKADGHEVELKQIEDWNVVELIVNGETVYTCNITELDFGGDGKLDPLCAEALQAVQTAY.

This sequence belongs to the UPF0728 family.

In Branchiostoma floridae (Florida lancelet), this protein is UPF0728 protein.